Here is a 155-residue protein sequence, read N- to C-terminus: S-ribosylhomocysteine lyase (155 aa).

Residues His-57, His-61, and Cys-124 each contribute to the Fe cation site.

It belongs to the LuxS family. Homodimer. Requires Fe cation as cofactor.

It carries out the reaction S-(5-deoxy-D-ribos-5-yl)-L-homocysteine = (S)-4,5-dihydroxypentane-2,3-dione + L-homocysteine. Its function is as follows. Involved in the synthesis of autoinducer 2 (AI-2) which is secreted by bacteria and is used to communicate both the cell density and the metabolic potential of the environment. The regulation of gene expression in response to changes in cell density is called quorum sensing. Catalyzes the transformation of S-ribosylhomocysteine (RHC) to homocysteine (HC) and 4,5-dihydroxy-2,3-pentadione (DPD). This is S-ribosylhomocysteine lyase from Listeria monocytogenes serotype 4a (strain HCC23).